The sequence spans 167 residues: 3-isopropylmalate dehydratase small subunit (167 aa).

Belongs to the LeuD family. LeuD type 2 subfamily. Heterodimer of LeuC and LeuD.

The catalysed reaction is (2R,3S)-3-isopropylmalate = (2S)-2-isopropylmalate. The protein operates within amino-acid biosynthesis; L-leucine biosynthesis; L-leucine from 3-methyl-2-oxobutanoate: step 2/4. Catalyzes the isomerization between 2-isopropylmalate and 3-isopropylmalate, via the formation of 2-isopropylmaleate. The sequence is that of 3-isopropylmalate dehydratase small subunit from Nitratidesulfovibrio vulgaris (strain ATCC 29579 / DSM 644 / CCUG 34227 / NCIMB 8303 / VKM B-1760 / Hildenborough) (Desulfovibrio vulgaris).